We begin with the raw amino-acid sequence, 40 residues long: Large ribosomal subunit protein bL36A (40 aa).

The protein belongs to the bacterial ribosomal protein bL36 family.

This is Large ribosomal subunit protein bL36A from Saccharopolyspora erythraea (strain ATCC 11635 / DSM 40517 / JCM 4748 / NBRC 13426 / NCIMB 8594 / NRRL 2338).